Reading from the N-terminus, the 324-residue chain is Acetaldehyde dehydrogenase 1 (324 aa).

NAD(+) is bound at residue 18-21 (SGNI). The active-site Acyl-thioester intermediate is Cys136. NAD(+) contacts are provided by residues 167-175 (SAGPGTRAN) and Asn297.

The protein belongs to the acetaldehyde dehydrogenase family.

It catalyses the reaction acetaldehyde + NAD(+) + CoA = acetyl-CoA + NADH + H(+). The protein is Acetaldehyde dehydrogenase 1 of Parafrankia sp. (strain EAN1pec).